A 204-amino-acid polypeptide reads, in one-letter code: Urease accessory protein UreG (204 aa).

12–19 (GPVGSGKT) contributes to the GTP binding site.

It belongs to the SIMIBI class G3E GTPase family. UreG subfamily. As to quaternary structure, homodimer. UreD, UreF and UreG form a complex that acts as a GTP-hydrolysis-dependent molecular chaperone, activating the urease apoprotein by helping to assemble the nickel containing metallocenter of UreC. The UreE protein probably delivers the nickel.

The protein resides in the cytoplasm. Facilitates the functional incorporation of the urease nickel metallocenter. This process requires GTP hydrolysis, probably effectuated by UreG. The chain is Urease accessory protein UreG from Pseudomonas aeruginosa (strain LESB58).